We begin with the raw amino-acid sequence, 229 residues long: MAGKKYRDAVAKTDRFQEYDLVDAVEKIREITQVKFDATIDIAMKLGVDPRHADQVVRGTVMLPHGTGKTVSVLVVCKEAKAEEAVAAGADFVGFEEYVEKIQNGWTGVDVIIATPDVMGQLGKVAKILGPRGLMPNPKSGTVTMDVAKAVKEVKAGKIEFRVDKAGNVHAPVGKVSFQSEQLVENITSFLKEVVRLKPSAAKGQYVQGIALSSTMSPSVKVKREKFVA.

It belongs to the universal ribosomal protein uL1 family. In terms of assembly, part of the 50S ribosomal subunit.

Binds directly to 23S rRNA. The L1 stalk is quite mobile in the ribosome, and is involved in E site tRNA release. In terms of biological role, protein L1 is also a translational repressor protein, it controls the translation of the L11 operon by binding to its mRNA. The protein is Large ribosomal subunit protein uL1 of Chlorobium phaeobacteroides (strain DSM 266 / SMG 266 / 2430).